A 201-amino-acid chain; its full sequence is LexA repressor 1 (201 aa).

The segment at residues 28 to 48 is a DNA-binding region (H-T-H motif); sequence LREIAAHLKISGTLGVSKHLE. Catalysis depends on for autocatalytic cleavage activity residues S120 and K157.

The protein belongs to the peptidase S24 family. Homodimer.

It carries out the reaction Hydrolysis of Ala-|-Gly bond in repressor LexA.. Functionally, represses a number of genes involved in the response to DNA damage (SOS response), including recA and lexA. In the presence of single-stranded DNA, RecA interacts with LexA causing an autocatalytic cleavage which disrupts the DNA-binding part of LexA, leading to derepression of the SOS regulon and eventually DNA repair. This is LexA repressor 1 from Geobacter sulfurreducens (strain ATCC 51573 / DSM 12127 / PCA).